The following is a 286-amino-acid chain: Transcription factor MafA (286 aa).

Phosphoserine occurs at positions 14 and 49. Residues 51 to 85 (SSTPLSTPCSSVPSSPSFCAPSPGGQPSAGPTAAP) show a composition bias toward low complexity. The tract at residues 51-87 (SSTPLSTPCSSVPSSPSFCAPSPGGQPSAGPTAAPLG) is disordered. Phosphothreonine is present on residues T53 and T57. Phosphoserine occurs at positions 61 and 65. Phosphothreonine is present on T113. The interval 126–167 (HHHHHHHQSYESFRPQPFGGEELPPAAHHHNAHHHHHHHHLR) is disordered. Positions 152 to 166 (AHHHNAHHHHHHHHL) are enriched in basic residues. Positions 199 to 224 (RLKQNRRTLKNRGYAQSCRYKRVQQR) are basic motif. One can recognise a bZIP domain in the interval 199-262 (RLKQNRRTLK…DLYKEKYEKL (64 aa)). A leucine-zipper region spans residues 227-248 (LENEKCQLQSQVEQLKQEVSRL). The tract at residues 265-286 (RGFPREPSPPAAPKTTAADFFM) is disordered. Residue S272 is modified to Phosphoserine. The span at 277–286 (PKTTAADFFM) shows a compositional bias: low complexity.

This sequence belongs to the bZIP family. Maf subfamily. Forms homodimers or heterodimers. May interact (via leucine-zipper domain) with MAFB. May interact with FOS and JUN. Interacts with PCAF; this interaction impairs MAFA ubiquitination.

The protein localises to the nucleus. Functionally, transcription factor involved in transcription regulation during lens development, including that of crystallin and filensin/BFSP1 genes. Binds to CRE-type MARE 5'-TGCTGACGTCAGCA-3' and TRE-type MARE 5'-TGCTGACTCAGCA-3' DNA sequences. In Gallus gallus (Chicken), this protein is Transcription factor MafA (MAFA).